A 308-amino-acid chain; its full sequence is Eukaryotic translation initiation factor 3 subunit G (308 aa).

Residues 1-23 (MAPVAAPSTSQPAGGKPMNWADE) form a disordered region. The RRM domain occupies 225–303 (PTLRVTNLSE…LILSCQWSLP (79 aa)).

The protein belongs to the eIF-3 subunit G family. In terms of assembly, component of the eukaryotic translation initiation factor 3 (eIF-3) complex.

It is found in the cytoplasm. Functionally, RNA-binding component of the eukaryotic translation initiation factor 3 (eIF-3) complex, which is involved in protein synthesis of a specialized repertoire of mRNAs and, together with other initiation factors, stimulates binding of mRNA and methionyl-tRNAi to the 40S ribosome. The eIF-3 complex specifically targets and initiates translation of a subset of mRNAs involved in cell proliferation. This subunit can bind 18S rRNA. This chain is Eukaryotic translation initiation factor 3 subunit G, found in Mycosarcoma maydis (Corn smut fungus).